A 166-amino-acid chain; its full sequence is NAD(P)H-quinone oxidoreductase subunit I, chloroplastic (166 aa).

4Fe-4S ferredoxin-type domains are found at residues 55–84 (GRIHFEFDKCIACEVCVRVCPIDLPVVDWK) and 95–124 (LNYSIDFGICIFCGNCVEYCPTNCLSMTEE). The [4Fe-4S] cluster site is built by Cys64, Cys67, Cys70, Cys74, Cys104, Cys107, Cys110, and Cys114.

It belongs to the complex I 23 kDa subunit family. NDH is composed of at least 16 different subunits, 5 of which are encoded in the nucleus. The cofactor is [4Fe-4S] cluster.

The protein resides in the plastid. It localises to the chloroplast thylakoid membrane. It catalyses the reaction a plastoquinone + NADH + (n+1) H(+)(in) = a plastoquinol + NAD(+) + n H(+)(out). The catalysed reaction is a plastoquinone + NADPH + (n+1) H(+)(in) = a plastoquinol + NADP(+) + n H(+)(out). NDH shuttles electrons from NAD(P)H:plastoquinone, via FMN and iron-sulfur (Fe-S) centers, to quinones in the photosynthetic chain and possibly in a chloroplast respiratory chain. The immediate electron acceptor for the enzyme in this species is believed to be plastoquinone. Couples the redox reaction to proton translocation, and thus conserves the redox energy in a proton gradient. This is NAD(P)H-quinone oxidoreductase subunit I, chloroplastic from Pentanema britannica (British yellowhead).